We begin with the raw amino-acid sequence, 342 residues long: Farnesyl pyrophosphate synthase 2 (342 aa).

Residues Lys48, Arg51, and Gln86 each coordinate isopentenyl diphosphate. Positions 93 and 97 each coordinate Mg(2+). Arg102 serves as a coordination point for dimethylallyl diphosphate. Residue Arg103 coordinates isopentenyl diphosphate. 5 residues coordinate dimethylallyl diphosphate: Lys190, Thr191, Gln229, Lys246, and Lys255.

This sequence belongs to the FPP/GGPP synthase family. It depends on Mg(2+) as a cofactor.

It is found in the cytoplasm. It catalyses the reaction isopentenyl diphosphate + dimethylallyl diphosphate = (2E)-geranyl diphosphate + diphosphate. The enzyme catalyses isopentenyl diphosphate + (2E)-geranyl diphosphate = (2E,6E)-farnesyl diphosphate + diphosphate. It functions in the pathway isoprenoid biosynthesis; farnesyl diphosphate biosynthesis; farnesyl diphosphate from geranyl diphosphate and isopentenyl diphosphate: step 1/1. It participates in isoprenoid biosynthesis; geranyl diphosphate biosynthesis; geranyl diphosphate from dimethylallyl diphosphate and isopentenyl diphosphate: step 1/1. In terms of biological role, catalyzes the sequential condensation of isopentenyl pyrophosphate with the allylic pyrophosphates, dimethylallyl pyrophosphate, and then with the resultant geranylpyrophosphate to the ultimate product farnesyl pyrophosphate. This is Farnesyl pyrophosphate synthase 2 (FPS2) from Parthenium argentatum (Guayule rubber plant).